The chain runs to 81 residues: RNA-binding protein Hfq (81 aa).

A Sm domain is found at 10–70 (DLFLNSVRKS…ISTIMPSQPV (61 aa)).

It belongs to the Hfq family. As to quaternary structure, homohexamer.

RNA chaperone that binds small regulatory RNA (sRNAs) and mRNAs to facilitate mRNA translational regulation in response to envelope stress, environmental stress and changes in metabolite concentrations. Also binds with high specificity to tRNAs. This Mesorhizobium japonicum (strain LMG 29417 / CECT 9101 / MAFF 303099) (Mesorhizobium loti (strain MAFF 303099)) protein is RNA-binding protein Hfq.